A 427-amino-acid polypeptide reads, in one-letter code: Trigger factor (427 aa).

The PPIase FKBP-type domain maps to 163 to 248 (GDTVVIDFVG…IHEVKAKEVP (86 aa)).

Belongs to the FKBP-type PPIase family. Tig subfamily.

The protein resides in the cytoplasm. The catalysed reaction is [protein]-peptidylproline (omega=180) = [protein]-peptidylproline (omega=0). Functionally, involved in protein export. Acts as a chaperone by maintaining the newly synthesized protein in an open conformation. Functions as a peptidyl-prolyl cis-trans isomerase. The chain is Trigger factor from Streptococcus pneumoniae serotype 4 (strain ATCC BAA-334 / TIGR4).